The chain runs to 375 residues: Succinyl-diaminopimelate desuccinylase (375 aa).

Histidine 66 provides a ligand contact to Zn(2+). The active site involves aspartate 68. Aspartate 99 provides a ligand contact to Zn(2+). Glutamate 133 functions as the Proton acceptor in the catalytic mechanism. Zn(2+) is bound by residues glutamate 134, glutamate 162, and histidine 348.

This sequence belongs to the peptidase M20A family. DapE subfamily. In terms of assembly, homodimer. Zn(2+) is required as a cofactor. The cofactor is Co(2+).

The catalysed reaction is N-succinyl-(2S,6S)-2,6-diaminopimelate + H2O = (2S,6S)-2,6-diaminopimelate + succinate. It functions in the pathway amino-acid biosynthesis; L-lysine biosynthesis via DAP pathway; LL-2,6-diaminopimelate from (S)-tetrahydrodipicolinate (succinylase route): step 3/3. Catalyzes the hydrolysis of N-succinyl-L,L-diaminopimelic acid (SDAP), forming succinate and LL-2,6-diaminopimelate (DAP), an intermediate involved in the bacterial biosynthesis of lysine and meso-diaminopimelic acid, an essential component of bacterial cell walls. The sequence is that of Succinyl-diaminopimelate desuccinylase from Shigella dysenteriae serotype 1 (strain Sd197).